Consider the following 408-residue polypeptide: Formate-dependent phosphoribosylglycinamide formyltransferase (408 aa).

Residues 25–26 (EL) and E85 contribute to the N(1)-(5-phospho-beta-D-ribosyl)glycinamide site. ATP is bound by residues R118, K159, 164-169 (SSGKGQ), 199-202 (EAFV), and E207. The ATP-grasp domain maps to 123–318 (KLAAEELGLP…EFELHAKAIL (196 aa)). Residues E277 and E289 each coordinate Mg(2+). Residues D296, K365, and 372–373 (RR) contribute to the N(1)-(5-phospho-beta-D-ribosyl)glycinamide site.

It belongs to the PurK/PurT family. In terms of assembly, homodimer.

The catalysed reaction is N(1)-(5-phospho-beta-D-ribosyl)glycinamide + formate + ATP = N(2)-formyl-N(1)-(5-phospho-beta-D-ribosyl)glycinamide + ADP + phosphate + H(+). It participates in purine metabolism; IMP biosynthesis via de novo pathway; N(2)-formyl-N(1)-(5-phospho-D-ribosyl)glycinamide from N(1)-(5-phospho-D-ribosyl)glycinamide (formate route): step 1/1. In terms of biological role, involved in the de novo purine biosynthesis. Catalyzes the transfer of formate to 5-phospho-ribosyl-glycinamide (GAR), producing 5-phospho-ribosyl-N-formylglycinamide (FGAR). Formate is provided by PurU via hydrolysis of 10-formyl-tetrahydrofolate. This is Formate-dependent phosphoribosylglycinamide formyltransferase from Corynebacterium glutamicum (strain R).